We begin with the raw amino-acid sequence, 185 residues long: Elongation factor P (185 aa).

The protein belongs to the elongation factor P family.

The protein resides in the cytoplasm. It functions in the pathway protein biosynthesis; polypeptide chain elongation. Involved in peptide bond synthesis. Stimulates efficient translation and peptide-bond synthesis on native or reconstituted 70S ribosomes in vitro. Probably functions indirectly by altering the affinity of the ribosome for aminoacyl-tRNA, thus increasing their reactivity as acceptors for peptidyl transferase. This chain is Elongation factor P, found in Burkholderia vietnamiensis (strain G4 / LMG 22486) (Burkholderia cepacia (strain R1808)).